A 131-amino-acid polypeptide reads, in one-letter code: Large ribosomal subunit protein bL12 (131 aa).

The segment covering 100 to 125 (STPKPIKEGISKEDAEAAKKQLEDAG) has biased composition (basic and acidic residues). Residues 100 to 131 (STPKPIKEGISKEDAEAAKKQLEDAGGKVSIK) are disordered.

Belongs to the bacterial ribosomal protein bL12 family. In terms of assembly, homodimer. Part of the ribosomal stalk of the 50S ribosomal subunit. Forms a multimeric L10(L12)X complex, where L10 forms an elongated spine to which 2 to 4 L12 dimers bind in a sequential fashion. Binds GTP-bound translation factors.

Functionally, forms part of the ribosomal stalk which helps the ribosome interact with GTP-bound translation factors. Is thus essential for accurate translation. In Cyanothece sp. (strain PCC 7425 / ATCC 29141), this protein is Large ribosomal subunit protein bL12.